Here is a 293-residue protein sequence, read N- to C-terminus: Mimecan (293 aa).

Positions 1-19 (MKTLQATFFLVAFVPLVKP) are cleaved as a signal peptide. Asparagine 60 is a glycosylation site (N-linked (GlcNAc...) asparagine). 7 LRR repeats span residues 107–126 (EAVP…FNKI), 127–150 (KRIA…GNMI), 151–174 (EEIE…ENRL), 175–194 (VKLP…QNRI), 195–220 (KSRG…HNAL), 221–241 (ESVP…HNNI), and 242–272 (TTIT…GNPI). Asparagine 240 and asparagine 253 each carry an N-linked (GlcNAc...) asparagine glycan. Cysteine 250 and cysteine 283 are joined by a disulfide.

Belongs to the small leucine-rich proteoglycan (SLRP) family. SLRP class III subfamily. Post-translationally, contains keratan sulfate. Expressed in many tissues.

It is found in the secreted. The protein localises to the extracellular space. The protein resides in the extracellular matrix. Its function is as follows. Induces bone formation in conjunction with TGF-beta-1 or TGF-beta-2. This Coturnix japonica (Japanese quail) protein is Mimecan (OGN).